Here is a 287-residue protein sequence, read N- to C-terminus: MHYKKAFLASLLSSIALTAYAPPEPWATLTPSSKMDGGTTEYRTSFGLAVIPFTVTESKVKRNVISQINDGQVQVTTQKLPHPVSQIGDGQIQVTTQKVPPVVSHIVSQIGDGQLQITTAKNVVTKSTIAVPSKTATATATSTATAVSQIHDGQVQVTISSASSSSVLSKSKLEPTKKPNNENVIKVQACKSSGTLAITLQGGVLIDSNGRIGSIVANRQFQFDGPPPQAGAIYAGGWSITKHGTLAIGDNDVFYQCLSGTFYNLYDQSIGGQCNPVHLQTVGLVDC.

The N-terminal stretch at 1–21 is a signal peptide; it reads MHYKKAFLASLLSSIALTAYA. The propeptide occupies 22–62; it reads PPEPWATLTPSSKMDGGTTEYRTSFGLAVIPFTVTESKVKR. PIR1/2/3 repeat units lie at residues 62 to 80, 81 to 99, 104 to 122, and 144 to 162; these read RNVI…TQKL, PHPV…TQKV, SHIV…TAKN, and ATAV…ISSA.

Belongs to the PIR protein family. In terms of processing, covalently linked to beta-1,3-glucan of the inner cell wall layer via an alkali-sensitive ester linkage between the gamma-carboxyl group of glutamic acids, arising from specific glutamines within the PIR1/2/3 repeats, and hydroxyl groups of glucoses of beta-1,3-glucan chains.

Its subcellular location is the secreted. The protein localises to the cell wall. Component of the outer cell wall layer. May be involved in meiosis and sporulation. In Saccharomyces cerevisiae (strain RM11-1a) (Baker's yeast), this protein is Cell wall protein PIR5 (PIR5).